The following is a 222-amino-acid chain: Iodotyrosine deiodinase (222 aa).

FMN-binding positions include 34–38 and 61–62; these read RRTVR and PS. 3-iodo-L-tyrosine is bound by residues Glu91, Tyr95, and Lys116. Residues 171-173 and Arg212 contribute to the FMN site; that span reads THT.

This sequence belongs to the nitroreductase family. Homodimer. The cofactor is FMN.

The catalysed reaction is 2 iodide + L-tyrosine + 2 NADP(+) = 3,5-diiodo-L-tyrosine + 2 NADPH + H(+). It carries out the reaction iodide + L-tyrosine + NADP(+) = 3-iodo-L-tyrosine + NADPH. The enzyme catalyses 3-iodo-L-tyrosine + iodide + NADP(+) = 3,5-diiodo-L-tyrosine + NADPH + H(+). It catalyses the reaction L-tyrosine + chloride + NADP(+) = 3-chloro-L-tyrosine + NADPH. The catalysed reaction is bromide + L-tyrosine + NADP(+) = 3-bromo-L-tyrosine + NADPH. In terms of biological role, catalyzes the dehalogenation of halotyrosines such as 3-iodo-L-tyrosine and 3,5-diiodo-L-tyrosine. Likely to also catalyze the dehalogenation of other halotyrosines such as 3-bromo-L-tyrosine, 3-chloro-L-tyrosine and 3-iodo-L-tyrosine. Activity towards 3-iodo-L-tyrosine is much stronger than activity towards 3,5-diiodo-L-tyrosine and 2-iodophenol. The polypeptide is Iodotyrosine deiodinase (Haliscomenobacter hydrossis (strain ATCC 27775 / DSM 1100 / LMG 10767 / O)).